The primary structure comprises 271 residues: Enolase-phosphatase E1 (271 aa).

Residues D16 and E18 each contribute to the Mg(2+) site. Substrate contacts are provided by residues 150–151 and K199; that span reads SS. D226 lines the Mg(2+) pocket.

The protein belongs to the HAD-like hydrolase superfamily. MasA/MtnC family. As to quaternary structure, monomer. Requires Mg(2+) as cofactor.

The protein localises to the cytoplasm. It is found in the nucleus. The catalysed reaction is 5-methylsulfanyl-2,3-dioxopentyl phosphate + H2O = 1,2-dihydroxy-5-(methylsulfanyl)pent-1-en-3-one + phosphate. It functions in the pathway amino-acid biosynthesis; L-methionine biosynthesis via salvage pathway; L-methionine from S-methyl-5-thio-alpha-D-ribose 1-phosphate: step 3/6. It participates in amino-acid biosynthesis; L-methionine biosynthesis via salvage pathway; L-methionine from S-methyl-5-thio-alpha-D-ribose 1-phosphate: step 4/6. Its function is as follows. Bifunctional enzyme that catalyzes the enolization of 2,3-diketo-5-methylthiopentyl-1-phosphate (DK-MTP-1-P) into the intermediate 2-hydroxy-3-keto-5-methylthiopentenyl-1-phosphate (HK-MTPenyl-1-P), which is then dephosphorylated to form the acireductone 1,2-dihydroxy-3-keto-5-methylthiopentene (DHK-MTPene). In Candida dubliniensis (strain CD36 / ATCC MYA-646 / CBS 7987 / NCPF 3949 / NRRL Y-17841) (Yeast), this protein is Enolase-phosphatase E1.